Consider the following 286-residue polypeptide: Probable ketoamine kinase YniA (286 aa).

91-93 (DYL) is a binding site for ATP. Catalysis depends on D193, which acts as the Proton acceptor.

The protein belongs to the fructosamine kinase family.

Ketoamine kinase that phosphorylates ketoamines on the third carbon of the sugar moiety to generate ketoamine 3-phosphate. The protein is Probable ketoamine kinase YniA (yniA) of Escherichia coli O157:H7.